A 183-amino-acid polypeptide reads, in one-letter code: Dual-action ribosomal maturation protein DarP (183 aa).

The protein belongs to the DarP family.

Its subcellular location is the cytoplasm. In terms of biological role, member of a network of 50S ribosomal subunit biogenesis factors which assembles along the 30S-50S interface, preventing incorrect 23S rRNA structures from forming. Promotes peptidyl transferase center (PTC) maturation. This chain is Dual-action ribosomal maturation protein DarP, found in Salmonella gallinarum (strain 287/91 / NCTC 13346).